The primary structure comprises 351 residues: Divinyl chlorophyll a/b light-harvesting protein PcbA (351 aa).

The next 6 helical transmembrane spans lie at 27-47 (FIAA…AFTL), 64-84 (LIAL…GTFV), 89-109 (VTAI…GGLL), 202-222 (VMGG…FHIA), 242-262 (AILS…AFWC), and 305-325 (LTNV…WHAL).

Belongs to the PsbB/PsbC family. IsiA/Pcb subfamily. The antenna complex consists of divinyl chlorophylls (a and b) and divinyl chlorophyll a/b binding proteins and binds more divinyl chlorophyll b than does the antenna complex from high-light-adapted Prochlorococcus. The cofactor is divinyl chlorophyll a. Divinyl chlorophyll b is required as a cofactor.

It is found in the cellular thylakoid membrane. The antenna complex functions as a light receptor, it captures and delivers excitation energy to photosystems II and I. The Prochlorales pcb genes are not related to higher plant LHCs. The protein is Divinyl chlorophyll a/b light-harvesting protein PcbA (pcbA) of Prochlorococcus marinus (strain SARG / CCMP1375 / SS120).